Reading from the N-terminus, the 156-residue chain is Small ribosomal subunit protein uS7 (156 aa).

Belongs to the universal ribosomal protein uS7 family. In terms of assembly, part of the 30S ribosomal subunit. Contacts proteins S9 and S11.

Its function is as follows. One of the primary rRNA binding proteins, it binds directly to 16S rRNA where it nucleates assembly of the head domain of the 30S subunit. Is located at the subunit interface close to the decoding center, probably blocks exit of the E-site tRNA. The chain is Small ribosomal subunit protein uS7 from Shewanella sp. (strain MR-7).